We begin with the raw amino-acid sequence, 59 residues long: Small ribosomal subunit protein bS21 (59 aa).

The segment covering 32 to 42 (VRKREHYDKPS) has biased composition (basic and acidic residues). The segment at 32-59 (VRKREHYDKPSVKRKKKAEAARRKNAKK) is disordered. A compositionally biased stretch (basic residues) spans 43 to 59 (VKRKKKAEAARRKNAKK).

It belongs to the bacterial ribosomal protein bS21 family.

The sequence is that of Small ribosomal subunit protein bS21 from Clostridioides difficile (strain 630) (Peptoclostridium difficile).